Consider the following 248-residue polypeptide: tRNA (guanine-N(1)-)-methyltransferase (248 aa).

Residues G113 and 133–138 (LGDFVL) contribute to the S-adenosyl-L-methionine site.

This sequence belongs to the RNA methyltransferase TrmD family. As to quaternary structure, homodimer.

It is found in the cytoplasm. The enzyme catalyses guanosine(37) in tRNA + S-adenosyl-L-methionine = N(1)-methylguanosine(37) in tRNA + S-adenosyl-L-homocysteine + H(+). Its function is as follows. Specifically methylates guanosine-37 in various tRNAs. This Albidiferax ferrireducens (strain ATCC BAA-621 / DSM 15236 / T118) (Rhodoferax ferrireducens) protein is tRNA (guanine-N(1)-)-methyltransferase.